Here is a 406-residue protein sequence, read N- to C-terminus: Probable endo-xylogalacturonan hydrolase A (406 aa).

The N-terminal stretch at 1–18 is a signal peptide; the sequence is MLYPRNLALFSLLSLSSA. PbH1 repeat units lie at residues 183–213, 214–235, 237–257, and 299–320; these read TQHVTFKNLRMDATSNSQNPPKNTDGFDIGA, STHVTISSVSVTNDDDCVAFKP, SNYVTVEDVTCTGSHGISVGS, and VKNVTFSDFNVRGCDYAFQIES. Catalysis depends on aspartate 228, which acts as the Proton donor. Histidine 251 is an active-site residue. An N-linked (GlcNAc...) asparagine glycan is attached at asparagine 301.

This sequence belongs to the glycosyl hydrolase 28 family.

It is found in the secreted. Pectinolytic enzyme involved in the degradation of xylogalacturonan (xga), a galacturonan backbone heavily substituted with xylose, and which is one important component of the hairy regions of pectin. Activity requires a galacturonic acid backbone substituted with xylose. The chain is Probable endo-xylogalacturonan hydrolase A (xghA) from Aspergillus fumigatus (strain CBS 144.89 / FGSC A1163 / CEA10) (Neosartorya fumigata).